A 96-amino-acid chain; its full sequence is Co-chaperonin GroES (96 aa).

It belongs to the GroES chaperonin family. As to quaternary structure, heptamer of 7 subunits arranged in a ring. Interacts with the chaperonin GroEL.

It is found in the cytoplasm. Its function is as follows. Together with the chaperonin GroEL, plays an essential role in assisting protein folding. The GroEL-GroES system forms a nano-cage that allows encapsulation of the non-native substrate proteins and provides a physical environment optimized to promote and accelerate protein folding. GroES binds to the apical surface of the GroEL ring, thereby capping the opening of the GroEL channel. This Caulobacter sp. (strain K31) protein is Co-chaperonin GroES.